An 88-amino-acid polypeptide reads, in one-letter code: Small ribosomal subunit protein bS20 (88 aa).

A disordered region spans residues Met-1–Arg-25. The span at Ala-7–Ala-19 shows a compositional bias: basic residues.

It belongs to the bacterial ribosomal protein bS20 family.

In terms of biological role, binds directly to 16S ribosomal RNA. In Azoarcus sp. (strain BH72), this protein is Small ribosomal subunit protein bS20.